The following is a 71-amino-acid chain: R-phycoerythrin gamma-1 chain, chloroplastic (71 aa).

Cysteine 25 and cysteine 34 together coordinate phycourobilin. (2R,3E)-phycoerythrobilin is bound at residue cysteine 49. Position 58 (cysteine 58) interacts with phycourobilin.

As to quaternary structure, heteromer of 6 alpha, 6 beta and 1 gamma chains. Post-translationally, contains four covalently linked bilin chromophores.

The protein localises to the plastid. It localises to the chloroplast thylakoid membrane. In terms of biological role, critical for the incorporation of phycoerythrin in the phycobilisome complex. The sequence is that of R-phycoerythrin gamma-1 chain, chloroplastic from Gastroclonium coulteri (Red alga).